The chain runs to 423 residues: F-box protein At1g52495 (423 aa).

In terms of domain architecture, F-box spans 49–95; it reads KLKDVHLPLDLIVEILKKLPTKSLMRFRCVSKPWSFIISKRRDFVES.

The sequence is that of F-box protein At1g52495 from Arabidopsis thaliana (Mouse-ear cress).